Reading from the N-terminus, the 142-residue chain is Small heat shock protein IbpB (142 aa).

Residues 26-137 (AGESQSFPPY…AAQRIAISER (112 aa)) form the sHSP domain.

This sequence belongs to the small heat shock protein (HSP20) family. As to quaternary structure, homodimer. Forms homomultimers of about 100-150 subunits at optimal growth temperatures. Conformation changes to oligomers at high temperatures or high ionic concentrations. The decrease in size of the multimers is accompanied by an increase in chaperone activity.

It is found in the cytoplasm. Functionally, associates with aggregated proteins, together with IbpA, to stabilize and protect them from irreversible denaturation and extensive proteolysis during heat shock and oxidative stress. Aggregated proteins bound to the IbpAB complex are more efficiently refolded and reactivated by the ATP-dependent chaperone systems ClpB and DnaK/DnaJ/GrpE. Its activity is ATP-independent. In Shigella flexneri serotype 5b (strain 8401), this protein is Small heat shock protein IbpB.